The chain runs to 154 residues: Large ribosomal subunit protein uL13 (154 aa).

The protein belongs to the universal ribosomal protein uL13 family. In terms of assembly, part of the 50S ribosomal subunit.

Functionally, this protein is one of the early assembly proteins of the 50S ribosomal subunit, although it is not seen to bind rRNA by itself. It is important during the early stages of 50S assembly. In Cereibacter sphaeroides (strain ATCC 17029 / ATH 2.4.9) (Rhodobacter sphaeroides), this protein is Large ribosomal subunit protein uL13.